Consider the following 1500-residue polypeptide: Carbamoyl-phosphate synthase [ammonia], mitochondrial (1500 aa).

The N-terminal 38 residues, 1-38 (MTRILTAFKVVRTLKTGFGFTNVTAHQKWKFSRPGIRL), are a transit peptide targeting the mitochondrion. An anthranilate phosphoribosyltransferase homolog region spans residues 39–218 (LSVKAQTAHI…VKVYGKGNPT (180 aa)). An N6-acetyllysine; alternate mark is found at Lys-55, Lys-57, and Lys-119. At Lys-55 the chain carries N6-glutaryllysine; alternate. Lys-55, Lys-57, and Lys-119 each carry N6-succinyllysine; alternate. Ser-148 is subject to Phosphoserine. N6-acetyllysine; alternate occurs at positions 157 and 171. Lys-157 carries the post-translational modification N6-succinyllysine; alternate. Lys-171 carries the post-translational modification N6-glutaryllysine; alternate. Lys-176 carries the post-translational modification N6-glutaryllysine. N6-acetyllysine is present on residues Lys-182 and Lys-197. Lys-207, Lys-210, Lys-214, Lys-219, and Lys-228 each carry N6-acetyllysine; alternate. N6-glutaryllysine; alternate occurs at positions 207, 210, 214, 219, and 228. Lys-207 bears the N6-succinyllysine; alternate mark. Position 214 is an N6-succinyllysine; alternate (Lys-214). The region spanning 219-404 (KVVAVDCGIK…FSLIKKGKAT (186 aa)) is the Glutamine amidotransferase type-1 domain. Lys-237 is subject to N6-glutaryllysine. An N6-acetyllysine; alternate mark is found at Lys-280, Lys-287, Lys-307, and Lys-310. Residue Lys-280 is modified to N6-glutaryllysine; alternate. An N6-succinyllysine; alternate mark is found at Lys-287 and Lys-307. N6-glutaryllysine; alternate occurs at positions 307 and 310. N6-succinyllysine is present on Lys-400. N6-glutaryllysine; alternate occurs at positions 402, 412, 453, and 458. N6-succinyllysine; alternate occurs at positions 402 and 412. Lys-412, Lys-453, Lys-458, Lys-522, Lys-527, and Lys-532 each carry N6-acetyllysine; alternate. An N6-succinyllysine; alternate mark is found at Lys-458, Lys-522, and Lys-527. 2 positions are modified to N6-glutaryllysine; alternate: Lys-527 and Lys-532. A Phosphoserine; alternate modification is found at Ser-537. Ser-537 carries an O-linked (GlcNAc) serine; alternate glycan. At Ser-540 the chain carries Phosphoserine. One can recognise an ATP-grasp 1 domain in the interval 551 to 743 (SDKLNEINEK…LAFIAAKIAL (193 aa)). Lys-553 and Lys-560 each carry N6-acetyllysine; alternate. Lys-553 is subject to N6-glutaryllysine; alternate. 2 positions are modified to N6-succinyllysine; alternate: Lys-553 and Lys-560. Ser-569 carries the phosphoserine modification. Lys-575 and Lys-612 each carry N6-acetyllysine; alternate. 2 positions are modified to N6-succinyllysine; alternate: Lys-575 and Lys-612. Position 630 is an N6-acetyllysine (Lys-630). Position 728 is an N6-glutaryllysine (Lys-728). Lys-751, Lys-757, Lys-772, Lys-793, Lys-811, and Lys-831 each carry N6-acetyllysine; alternate. Residues Lys-751 and Lys-757 each carry the N6-succinyllysine; alternate modification. Residues Lys-757, Lys-772, Lys-793, and Lys-811 each carry the N6-glutaryllysine; alternate modification. An N6-succinyllysine; alternate modification is found at Lys-793. The residue at position 831 (Lys-831) is an N6-succinyllysine; alternate. The residue at position 835 (Ser-835) is a Phosphoserine. Residues Lys-841 and Lys-856 each carry the N6-acetyllysine; alternate modification. 2 positions are modified to N6-glutaryllysine; alternate: Lys-841 and Lys-856. Lys-869 bears the N6-glutaryllysine mark. N6-acetyllysine; alternate occurs at positions 875, 889, and 892. Lys-875, Lys-889, and Lys-892 each carry N6-glutaryllysine; alternate. Residues Lys-875, Lys-889, and Lys-892 each carry the N6-succinyllysine; alternate modification. Residues Ser-896 and Ser-898 each carry the phosphoserine modification. Lys-905 bears the N6-glutaryllysine mark. An N6-acetyllysine; alternate mark is found at Lys-908, Lys-915, and Lys-919. N6-glutaryllysine; alternate occurs at positions 908, 915, and 919. N6-succinyllysine; alternate occurs at positions 915 and 919. Residue Lys-935 is modified to N6-acetyllysine. At Ser-1036 the chain carries Phosphoserine. N6-acetyllysine; alternate is present on Lys-1074. At Lys-1074 the chain carries N6-glutaryllysine; alternate. Lys-1074 carries the N6-succinyllysine; alternate modification. A phosphoserine mark is found at Ser-1079, Ser-1090, and Ser-1093. An ATP-grasp 2 domain is found at 1093 to 1284 (SAVLDELKVA…FIDVATKVMI (192 aa)). Lys-1100 carries the post-translational modification N6-acetyllysine; alternate. Lys-1100 is subject to N6-succinyllysine; alternate. Residue Lys-1149 is modified to N6-succinyllysine. Lys-1150 is modified (N6-glutaryllysine). N6-acetyllysine; alternate is present on residues Lys-1168 and Lys-1183. Lys-1168 and Lys-1183 each carry N6-glutaryllysine; alternate. 2 positions are modified to N6-succinyllysine; alternate: Lys-1168 and Lys-1183. Ser-1203 carries the post-translational modification Phosphoserine. N6-acetyllysine is present on Lys-1222. Lys-1224 is modified (N6-glutaryllysine). 3 positions are modified to N6-acetyllysine; alternate: Lys-1232, Lys-1269, and Lys-1291. 3 positions are modified to N6-succinyllysine; alternate: Lys-1232, Lys-1269, and Lys-1291. Residue Ser-1331 is glycosylated (O-linked (GlcNAc) serine). An O-linked (GlcNAc) threonine glycan is attached at Thr-1332. Residues 1355 to 1500 (FKIPQKGILI…YRQYSAGKAA (146 aa)) form the MGS-like domain. Position 1356 is an N6-acetyllysine; alternate (Lys-1356). An N6-glutaryllysine; alternate mark is found at Lys-1356 and Lys-1360. 2 positions are modified to N6-succinyllysine; alternate: Lys-1356 and Lys-1360. Positions 1391, 1394, and 1410 each coordinate N-acetyl-L-glutamate. Residues Ser-1419 and Ser-1431 each carry the phosphoserine modification. The N-acetyl-L-glutamate site is built by Asn-1437 and Asn-1440. N6-acetyllysine; alternate is present on Lys-1444. Residue Lys-1444 is modified to N6-succinyllysine; alternate. Asn-1449 serves as a coordination point for N-acetyl-L-glutamate. N6-acetyllysine; alternate occurs at positions 1471, 1479, and 1486. An N6-succinyllysine; alternate mark is found at Lys-1471, Lys-1479, and Lys-1486. 2 positions are modified to N6-glutaryllysine; alternate: Lys-1479 and Lys-1486.

Can form homooligomers (monomers as predominant form and dimers). Post-translationally, undergoes proteolytic cleavage in the C-terminal region corresponding to the loss of approximately 12 AA residues from the C-terminus. Succinylated at Lys-287 and Lys-1291. Desuccinylated at Lys-1291 by SIRT5, leading to activation. In terms of processing, glutarylated. Glutarylation levels increase during fasting. Deglutarylated by SIRT5 at Lys-55, Lys-219, Lys-412, Lys-889, Lys-892, Lys-915, Lys-1360 and Lys-1486, leading to activation. Primarily in the liver and small intestine.

The protein resides in the mitochondrion. The protein localises to the nucleus. It is found in the nucleolus. Its subcellular location is the cell membrane. It carries out the reaction hydrogencarbonate + NH4(+) + 2 ATP = carbamoyl phosphate + 2 ADP + phosphate + 2 H(+). With respect to regulation, requires N-acetyl-L-glutamate (NAG) as an allosteric activator. Activated by glycerol in the absence of NAG, whereas in the presence of NAG it is inhibited by increasing concentrations of glycerol. Involved in the urea cycle of ureotelic animals where the enzyme plays an important role in removing excess ammonia from the cell. This Homo sapiens (Human) protein is Carbamoyl-phosphate synthase [ammonia], mitochondrial (CPS1).